The sequence spans 314 residues: Probable cell division protein WhiA (314 aa).

Positions 274 to 308 form a DNA-binding region, H-T-H motif; the sequence is SLKELGEMVSTGTISKSGVNHRLRKLNELADKIRS.

Belongs to the WhiA family.

Involved in cell division and chromosome segregation. This Staphylococcus carnosus (strain TM300) protein is Probable cell division protein WhiA.